The chain runs to 654 residues: Meiotically up-regulated gene 24 protein (654 aa).

One can recognise an RRM 1 domain in the interval 299–355; sequence RNVFIGNLPSSYHEKEIEEAFGKFGKIEHIKILSKKNIAFVHFLNIRDAIKVVRTLS. The interval 383–404 is disordered; that stretch reads SCFTSKQNPDTTSDRCRQQESK. Polar residues predominate over residues 384 to 393; it reads CFTSKQNPDT. Residues 394-404 show a composition bias toward basic and acidic residues; that stretch reads TSDRCRQQESK. RRM domains lie at 409 to 482 and 500 to 571; these read RTVF…WGKE and RNVY…YAPD.

The protein localises to the cytoplasm. In terms of biological role, has a role in meiosis. The protein is Meiotically up-regulated gene 24 protein (mug24) of Schizosaccharomyces pombe (strain 972 / ATCC 24843) (Fission yeast).